The following is a 471-amino-acid chain: Alpha-amylase (471 aa).

Gln-1 carries the post-translational modification Pyrrolidone carboxylic acid. An intrachain disulfide couples Cys-28 to Cys-84. Residues Asn-98, Arg-146, and Asp-155 each coordinate Ca(2+). An intrachain disulfide couples Cys-134 to Cys-148. Residue Arg-183 coordinates chloride. Asp-185 (nucleophile) is an active-site residue. Residue His-189 participates in Ca(2+) binding. Glu-222 serves as the catalytic Proton donor. Residues Asn-285 and Arg-321 each contribute to the chloride site. A compositionally biased stretch (polar residues) spans 326–343 (FDFTDNDQGPPQDGSGNL). Positions 326-346 (FDFTDNDQGPPQDGSGNLISP) are disordered. 2 disulfide bridges follow: Cys-354–Cys-360 and Cys-425–Cys-437.

It belongs to the glycosyl hydrolase 13 family. As to quaternary structure, monomer. Ca(2+) serves as cofactor. Requires chloride as cofactor.

The enzyme catalyses Endohydrolysis of (1-&gt;4)-alpha-D-glucosidic linkages in polysaccharides containing three or more (1-&gt;4)-alpha-linked D-glucose units.. The chain is Alpha-amylase from Tenebrio molitor (Yellow mealworm beetle).